A 220-amino-acid polypeptide reads, in one-letter code: Deoxyribose-phosphate aldolase (220 aa).

The active-site Proton donor/acceptor is D89. The active-site Schiff-base intermediate with acetaldehyde is the K151. K180 functions as the Proton donor/acceptor in the catalytic mechanism.

This sequence belongs to the DeoC/FbaB aldolase family. DeoC type 1 subfamily.

It is found in the cytoplasm. It catalyses the reaction 2-deoxy-D-ribose 5-phosphate = D-glyceraldehyde 3-phosphate + acetaldehyde. It functions in the pathway carbohydrate degradation; 2-deoxy-D-ribose 1-phosphate degradation; D-glyceraldehyde 3-phosphate and acetaldehyde from 2-deoxy-alpha-D-ribose 1-phosphate: step 2/2. In terms of biological role, catalyzes a reversible aldol reaction between acetaldehyde and D-glyceraldehyde 3-phosphate to generate 2-deoxy-D-ribose 5-phosphate. The protein is Deoxyribose-phosphate aldolase of Thermus thermophilus (strain ATCC BAA-163 / DSM 7039 / HB27).